Here is a 496-residue protein sequence, read N- to C-terminus: Polyphosphate:AMP phosphotransferase (496 aa).

PPK2 stretches follow at residues 11 to 234 (IDKD…LQAA) and 269 to 495 (LDKD…YKKD).

This sequence belongs to the polyphosphate kinase 2 (PPK2) family. Class II subfamily. In terms of assembly, homodimer. It depends on Mg(2+) as a cofactor.

It carries out the reaction [phosphate](n) + ADP = [phosphate](n+1) + AMP. Functionally, uses inorganic polyphosphate (polyP) as a donor to convert AMP to ADP. Can also convert GMP to GDP, with lower efficiency. Cannot dephosphorylate ADP in the presence of polyP. The chain is Polyphosphate:AMP phosphotransferase from Pseudomonas aeruginosa (strain ATCC 15692 / DSM 22644 / CIP 104116 / JCM 14847 / LMG 12228 / 1C / PRS 101 / PAO1).